A 337-amino-acid chain; its full sequence is Dihydroorotate dehydrogenase (quinone) (337 aa).

FMN contacts are provided by residues 62 to 66 (AGLDK) and threonine 86. Lysine 66 provides a ligand contact to substrate. 111–115 (NRFGF) provides a ligand contact to substrate. FMN is bound by residues asparagine 139 and asparagine 172. Asparagine 172 lines the substrate pocket. Catalysis depends on serine 175, which acts as the Nucleophile. Asparagine 177 is a binding site for substrate. 2 residues coordinate FMN: lysine 217 and threonine 245. 246-247 (NT) provides a ligand contact to substrate. FMN contacts are provided by residues glycine 268, glycine 297, and 318–319 (YS).

The protein belongs to the dihydroorotate dehydrogenase family. Type 2 subfamily. As to quaternary structure, monomer. FMN is required as a cofactor.

It is found in the cell membrane. It carries out the reaction (S)-dihydroorotate + a quinone = orotate + a quinol. It participates in pyrimidine metabolism; UMP biosynthesis via de novo pathway; orotate from (S)-dihydroorotate (quinone route): step 1/1. Its function is as follows. Catalyzes the conversion of dihydroorotate to orotate with quinone as electron acceptor. This is Dihydroorotate dehydrogenase (quinone) from Methylobacillus flagellatus (strain ATCC 51484 / DSM 6875 / VKM B-1610 / KT).